Reading from the N-terminus, the 287-residue chain is Large ribosomal subunit protein uL2 (287 aa).

The tract at residues 220-287 (VRGSVMNPCD…SKRSRGGRDS (68 aa)) is disordered. Over residues 271–287 (VRRRRRISKRSRGGRDS) the composition is skewed to basic residues.

The protein belongs to the universal ribosomal protein uL2 family. As to quaternary structure, part of the 50S ribosomal subunit. Forms a bridge to the 30S subunit in the 70S ribosome.

Its function is as follows. One of the primary rRNA binding proteins. Required for association of the 30S and 50S subunits to form the 70S ribosome, for tRNA binding and peptide bond formation. It has been suggested to have peptidyltransferase activity; this is somewhat controversial. Makes several contacts with the 16S rRNA in the 70S ribosome. In Prochlorococcus marinus (strain MIT 9515), this protein is Large ribosomal subunit protein uL2.